The sequence spans 335 residues: Tetraacyldisaccharide 4'-kinase (335 aa).

62-69 (NVGGTGKT) is a binding site for ATP.

Belongs to the LpxK family.

The enzyme catalyses a lipid A disaccharide + ATP = a lipid IVA + ADP + H(+). Its pathway is glycolipid biosynthesis; lipid IV(A) biosynthesis; lipid IV(A) from (3R)-3-hydroxytetradecanoyl-[acyl-carrier-protein] and UDP-N-acetyl-alpha-D-glucosamine: step 6/6. Transfers the gamma-phosphate of ATP to the 4'-position of a tetraacyldisaccharide 1-phosphate intermediate (termed DS-1-P) to form tetraacyldisaccharide 1,4'-bis-phosphate (lipid IVA). This Methylobacillus flagellatus (strain ATCC 51484 / DSM 6875 / VKM B-1610 / KT) protein is Tetraacyldisaccharide 4'-kinase.